A 37-amino-acid chain; its full sequence is Large ribosomal subunit protein bL36 (37 aa).

Belongs to the bacterial ribosomal protein bL36 family.

This Geobacter sp. (strain M21) protein is Large ribosomal subunit protein bL36.